The following is a 476-amino-acid chain: Protein transport protein Sec61 subunit alpha-like 1 (476 aa).

The Cytoplasmic portion of the chain corresponds to Ala-2 to Leu-33. Residues Trp-34–Ile-53 traverse the membrane as a helical segment. At Met-54–Leu-76 the chain is on the lumenal side. A helical membrane pass occupies residues Met-77–Gly-96. Residues Ala-97–Lys-117 are Cytoplasmic-facing. A helical transmembrane segment spans residues Leu-118 to Gly-138. Over Asp-139–Gly-144 the chain is Lumenal. A helical transmembrane segment spans residues Ala-145–Leu-165. Residues Asp-166–Gly-172 are Cytoplasmic-facing. The helical transmembrane segment at Tyr-173–Trp-193 threads the bilayer. Topologically, residues Lys-194–Pro-240 are lumenal. The chain crosses the membrane as a helical span at residues Asn-241–Phe-261. Residues Arg-262–Asn-288 lie on the Cytoplasmic side of the membrane. The helical transmembrane segment at Ile-289–Ser-309 threads the bilayer. At Thr-310–Val-354 the chain is on the lumenal side. The helical transmembrane segment at Leu-355–Phe-375 threads the bilayer. At Ser-376–Ala-420 the chain is on the cytoplasmic side. A helical transmembrane segment spans residues Ala-421–Ile-441. Residues Gly-442–Thr-445 lie on the Lumenal side of the membrane. The helical transmembrane segment at Gly-446–Val-462 threads the bilayer. Residues Lys-463 to Phe-476 are Cytoplasmic-facing.

The protein belongs to the SecY/SEC61-alpha family. The SEC61 channel-forming translocon complex consists of channel-forming core components SEC61A1, SEC61B and SEC61G and different auxiliary components such as SEC62 and SEC63. The SEC61 channel associates with the multi-pass translocon (MPT) complex.

Its subcellular location is the endoplasmic reticulum membrane. Its function is as follows. Component of SEC61 channel-forming translocon complex that mediates transport of signal peptide-containing precursor polypeptides across the endoplasmic reticulum (ER). Forms a ribosome receptor and a gated pore in the ER membrane, both functions required for cotranslational translocation of nascent polypeptides. May cooperate with auxiliary protein SEC62, SEC63 and HSPA5/BiP to enable post-translational transport of small presecretory proteins. The SEC61 channel is also involved in ER membrane insertion of transmembrane proteins: it mediates membrane insertion of the first few transmembrane segments of proteins, while insertion of subsequent transmembrane regions of multi-pass membrane proteins is mediated by the multi-pass translocon (MPT) complex. Plays a role in the pronephric kidney tubule development. The sequence is that of Protein transport protein Sec61 subunit alpha-like 1 (sec61al1) from Danio rerio (Zebrafish).